Consider the following 293-residue polypeptide: Formamidopyrimidine-DNA glycosylase (293 aa).

Catalysis depends on Pro-2, which acts as the Schiff-base intermediate with DNA. Catalysis depends on Glu-3, which acts as the Proton donor. Lys-58 (proton donor; for beta-elimination activity) is an active-site residue. 3 residues coordinate DNA: His-104, Arg-123, and Lys-166. An FPG-type zinc finger spans residues 257 to 293; sequence AVYDREGERCRTPGCNGTVKRLVQNGRSTFWCSGCQT. The active-site Proton donor; for delta-elimination activity is the Arg-283.

The protein belongs to the FPG family. In terms of assembly, monomer. It depends on Zn(2+) as a cofactor.

It carries out the reaction Hydrolysis of DNA containing ring-opened 7-methylguanine residues, releasing 2,6-diamino-4-hydroxy-5-(N-methyl)formamidopyrimidine.. It catalyses the reaction 2'-deoxyribonucleotide-(2'-deoxyribose 5'-phosphate)-2'-deoxyribonucleotide-DNA = a 3'-end 2'-deoxyribonucleotide-(2,3-dehydro-2,3-deoxyribose 5'-phosphate)-DNA + a 5'-end 5'-phospho-2'-deoxyribonucleoside-DNA + H(+). Its function is as follows. Involved in base excision repair of DNA damaged by oxidation or by mutagenic agents. Acts as a DNA glycosylase that recognizes and removes damaged bases. Has a preference for oxidized purines, such as 7,8-dihydro-8-oxoguanine (8-oxoG). Has AP (apurinic/apyrimidinic) lyase activity and introduces nicks in the DNA strand. Cleaves the DNA backbone by beta-delta elimination to generate a single-strand break at the site of the removed base with both 3'- and 5'-phosphates. The protein is Formamidopyrimidine-DNA glycosylase of Rhodopseudomonas palustris (strain HaA2).